Consider the following 33-residue polypeptide: Cytochrome b6-f complex subunit 6 (33 aa).

A helical membrane pass occupies residues 4–24; it reads ITIISYFGFLLASIIFTLVLF.

It belongs to the PetL family. In terms of assembly, the 4 large subunits of the cytochrome b6-f complex are cytochrome b6, subunit IV (17 kDa polypeptide, PetD), cytochrome f and the Rieske protein, while the 4 small subunits are PetG, PetL, PetM and PetN. The complex functions as a dimer.

The protein resides in the plastid. Its subcellular location is the chloroplast thylakoid membrane. Component of the cytochrome b6-f complex, which mediates electron transfer between photosystem II (PSII) and photosystem I (PSI), cyclic electron flow around PSI, and state transitions. PetL is important for photoautotrophic growth as well as for electron transfer efficiency and stability of the cytochrome b6-f complex. The sequence is that of Cytochrome b6-f complex subunit 6 from Pinus thunbergii (Japanese black pine).